A 335-amino-acid chain; its full sequence is Ketol-acid reductoisomerase (NAD(P)(+)) (335 aa).

The KARI N-terminal Rossmann domain occupies 2–182 (AKIYKDEDIS…GCARAGVIES (181 aa)). Residues 25–28 (YGSQ), R49, S53, and 83–86 (DMVQ) contribute to the NADP(+) site. H108 is an active-site residue. G134 is an NADP(+) binding site. The KARI C-terminal knotted domain maps to 183–328 (TFKEETETDL…RKLREMMFRG (146 aa)). 4 residues coordinate Mg(2+): D191, E195, E227, and E231. S252 contacts substrate.

Belongs to the ketol-acid reductoisomerase family. As to quaternary structure, homodimer. The cofactor is Mg(2+).

The catalysed reaction is (2R)-2,3-dihydroxy-3-methylbutanoate + NAD(+) = (2S)-2-acetolactate + NADH + H(+). The enzyme catalyses (2R)-2,3-dihydroxy-3-methylbutanoate + NADP(+) = (2S)-2-acetolactate + NADPH + H(+). Its pathway is amino-acid biosynthesis; L-isoleucine biosynthesis; L-isoleucine from 2-oxobutanoate: step 2/4. It participates in amino-acid biosynthesis; L-valine biosynthesis; L-valine from pyruvate: step 2/4. In terms of biological role, involved in the biosynthesis of branched-chain amino acids (BCAA). Catalyzes an alkyl-migration followed by a ketol-acid reduction of (S)-2-acetolactate (S2AL) to yield (R)-2,3-dihydroxy-isovalerate. In the isomerase reaction, S2AL is rearranged via a Mg-dependent methyl migration to produce 3-hydroxy-3-methyl-2-ketobutyrate (HMKB). In the reductase reaction, this 2-ketoacid undergoes a metal-dependent reduction by NADPH or NADH to yield (R)-2,3-dihydroxy-isovalerate. The sequence is that of Ketol-acid reductoisomerase (NAD(P)(+)) from Ignisphaera aggregans (strain DSM 17230 / JCM 13409 / AQ1.S1).